A 298-amino-acid polypeptide reads, in one-letter code: tRNA dimethylallyltransferase (298 aa).

Residue 16 to 23 (GPTASGKS) coordinates ATP. 18–23 (TASGKS) contributes to the substrate binding site. 2 interaction with substrate tRNA regions span residues 41–44 (DSMQ) and 165–169 (QRIVR).

Belongs to the IPP transferase family. In terms of assembly, monomer. Mg(2+) serves as cofactor.

It carries out the reaction adenosine(37) in tRNA + dimethylallyl diphosphate = N(6)-dimethylallyladenosine(37) in tRNA + diphosphate. Its function is as follows. Catalyzes the transfer of a dimethylallyl group onto the adenine at position 37 in tRNAs that read codons beginning with uridine, leading to the formation of N6-(dimethylallyl)adenosine (i(6)A). The chain is tRNA dimethylallyltransferase from Rhizobium rhizogenes (strain K84 / ATCC BAA-868) (Agrobacterium radiobacter).